Consider the following 144-residue polypeptide: Bacilliredoxin BT9727_3899 (144 aa).

It belongs to the bacilliredoxin family.

In Bacillus thuringiensis subsp. konkukian (strain 97-27), this protein is Bacilliredoxin BT9727_3899.